Here is a 593-residue protein sequence, read N- to C-terminus: Proline dehydrogenase 1, mitochondrial (593 aa).

The interval 24-44 (PAAREQPAAGPGAEPVCGPAE) is disordered. Residues lysine 368 and lysine 479 each carry the N6-acetyllysine modification.

It belongs to the proline oxidase family. It depends on FAD as a cofactor.

It localises to the mitochondrion matrix. It catalyses the reaction L-proline + a quinone = (S)-1-pyrroline-5-carboxylate + a quinol + H(+). Its pathway is amino-acid degradation; L-proline degradation into L-glutamate; L-glutamate from L-proline: step 1/2. Functionally, converts proline to delta-1-pyrroline-5-carboxylate. The protein is Proline dehydrogenase 1, mitochondrial of Bos taurus (Bovine).